The chain runs to 486 residues: Ribosomal RNA small subunit methyltransferase F (486 aa).

Residues 122–128 (ASAPGSK), glutamate 146, aspartate 173, and aspartate 191 each bind S-adenosyl-L-methionine. The Nucleophile role is filled by cysteine 244.

This sequence belongs to the class I-like SAM-binding methyltransferase superfamily. RsmB/NOP family.

The protein resides in the cytoplasm. It catalyses the reaction cytidine(1407) in 16S rRNA + S-adenosyl-L-methionine = 5-methylcytidine(1407) in 16S rRNA + S-adenosyl-L-homocysteine + H(+). Its function is as follows. Specifically methylates the cytosine at position 1407 (m5C1407) of 16S rRNA. This is Ribosomal RNA small subunit methyltransferase F from Shewanella loihica (strain ATCC BAA-1088 / PV-4).